A 205-amino-acid chain; its full sequence is Adenylyl-sulfate kinase (205 aa).

An ATP-binding site is contributed by 31-38 (GLSGAGKS). The Phosphoserine intermediate role is filled by serine 105.

Belongs to the APS kinase family.

It catalyses the reaction adenosine 5'-phosphosulfate + ATP = 3'-phosphoadenylyl sulfate + ADP + H(+). Its pathway is sulfur metabolism; hydrogen sulfide biosynthesis; sulfite from sulfate: step 2/3. Catalyzes the synthesis of activated sulfate. This is Adenylyl-sulfate kinase from Shewanella putrefaciens (strain CN-32 / ATCC BAA-453).